The sequence spans 124 residues: Small ribosomal subunit protein uS12 (124 aa).

The interval 1–28 (MPTISQLIGSERKRLTRKTKSPALKSCP) is disordered. The residue at position 89 (D89) is a 3-methylthioaspartic acid. The tract at residues 104–124 (TAGVKDRRQSRSKYGAKAPKD) is disordered.

Belongs to the universal ribosomal protein uS12 family. As to quaternary structure, part of the 30S ribosomal subunit. Contacts proteins S8 and S17. May interact with IF1 in the 30S initiation complex.

In terms of biological role, with S4 and S5 plays an important role in translational accuracy. Functionally, interacts with and stabilizes bases of the 16S rRNA that are involved in tRNA selection in the A site and with the mRNA backbone. Located at the interface of the 30S and 50S subunits, it traverses the body of the 30S subunit contacting proteins on the other side and probably holding the rRNA structure together. The combined cluster of proteins S8, S12 and S17 appears to hold together the shoulder and platform of the 30S subunit. The chain is Small ribosomal subunit protein uS12 from Prochlorococcus marinus (strain MIT 9312).